Consider the following 438-residue polypeptide: Polycomb protein eed-B (438 aa).

The segment at 1 to 70 (MSEASGRAAG…GRKGWGKGKW (70 aa)) is disordered. Polar residues predominate over residues 40-57 (SIESGTNTERPDTPTNAA). WD repeat units lie at residues 88 to 131 (DHNQ…DIRL), 139 to 182 (DADE…CIKH), 185 to 225 (GHGN…LVAI), 231 to 270 (GHRD…MKTA), 301 to 338 (IHRN…DDIE), 356 to 396 (SQCD…PHKA), and 405 to 438 (KCAS…DRLR).

The protein belongs to the WD repeat ESC family. As to quaternary structure, component of the prc2/eed-ezh2 complex. Can interact with ezh2, hdac1 and taf9. Interacts with yy1.

Its subcellular location is the nucleus. Functionally, polycomb group (PcG) protein. Component of the prc2/eed-ezh2 complex, which methylates 'Lys-9' and 'Lys-27' of histone H3, leading to transcriptional repression of the affected target gene. May play a role in neural induction. The polypeptide is Polycomb protein eed-B (eed-b) (Xenopus laevis (African clawed frog)).